Consider the following 306-residue polypeptide: Protein SEC13 homolog (306 aa).

WD repeat units follow at residues 11–50, 56–97, 102–143, 150–195, 202–245, and 252–291; these read QHRD…QSYP, GHNG…WQKT, THEA…QQWQ, CHDQ…NEWT, CHKD…TAEW, and QAPC…QWIK.

The protein belongs to the WD repeat SEC13 family. Probably part of the GATOR complex.

The protein resides in the cytoplasmic vesicle. It is found in the COPII-coated vesicle membrane. The protein localises to the endoplasmic reticulum membrane. It localises to the nucleus. Its subcellular location is the nuclear pore complex. The protein resides in the lysosome membrane. Its function is as follows. Functions as a component of the nuclear pore complex (NPC) and the COPII coat. In terms of biological role, as a component of the GATOR complex may function in the amino acid-sensing branch of the TORC1 signaling pathway. This Caenorhabditis briggsae protein is Protein SEC13 homolog.